A 336-amino-acid chain; its full sequence is Fructose-1,6-bisphosphatase class 1 (336 aa).

4 residues coordinate Mg(2+): Glu-92, Asp-115, Leu-117, and Asp-118. Residues 118-121 (DGSS), Asn-211, Tyr-244, 262-264 (YLY), and Lys-274 each bind substrate. Mg(2+) is bound at residue Glu-280.

Belongs to the FBPase class 1 family. As to quaternary structure, homotetramer. It depends on Mg(2+) as a cofactor.

It is found in the cytoplasm. It catalyses the reaction beta-D-fructose 1,6-bisphosphate + H2O = beta-D-fructose 6-phosphate + phosphate. It participates in carbohydrate biosynthesis; gluconeogenesis. The protein is Fructose-1,6-bisphosphatase class 1 of Vibrio atlanticus (strain LGP32) (Vibrio splendidus (strain Mel32)).